Here is a 249-residue protein sequence, read N- to C-terminus: Formylaminopyrimidine import ATP-binding protein ThiZ (249 aa).

One can recognise an ABC transporter domain in the interval Leu-6 to Met-228. Residue Ala-39 to Ser-46 participates in ATP binding.

This sequence belongs to the ABC transporter superfamily. As to quaternary structure, the complex is likely composed of an ATP-binding protein (ThiZ), a transmembrane protein (ThiX) and a solute-binding protein (ThiY).

Its subcellular location is the cell membrane. It functions in the pathway cofactor biosynthesis; thiamine diphosphate biosynthesis. Its function is as follows. Participates in a thiamine pyrimidine salvage pathway as part of the ABC transporter complex ThiXYZ involved in the import of thiamine degradation products such as the formylaminopyrimidine N-formyl-4-amino-5-aminomethyl-2-methylpyrimidine (FAMP). Is likely responsible for energy coupling to the transport system. The polypeptide is Formylaminopyrimidine import ATP-binding protein ThiZ (Halalkalibacterium halodurans (strain ATCC BAA-125 / DSM 18197 / FERM 7344 / JCM 9153 / C-125) (Bacillus halodurans)).